Consider the following 207-residue polypeptide: Interleukin-6 (207 aa).

Residues 1-20 (MNSLSTSAFSLGLLLVMATA) form the signal peptide. A disulfide bond links cysteine 67 and cysteine 73. Serine 76 bears the Phosphoserine mark. Cysteine 96 and cysteine 106 form a disulfide bridge.

The protein belongs to the IL-6 superfamily. In terms of assembly, component of a hexamer of two molecules each of IL6, IL6R and IL6ST; first binds to IL6R to associate with the signaling subunit IL6ST. Interacts with IL6R (via the N-terminal ectodomain); this interaction may be affected by IL6R-binding with SORL1, hence decreasing IL6 cis signaling. Interacts with SORL1 (via the N-terminal ectodomain); this interaction leads to IL6 internalization and lysosomal degradation. May form a trimeric complex with the soluble SORL1 ectodomain and soluble IL6R receptor; this interaction might stabilize circulating IL6, hence promoting IL6 trans signaling.

It localises to the secreted. Functionally, cytokine with a wide variety of biological functions in immunity, tissue regeneration, and metabolism. Binds to IL6R, then the complex associates to the signaling subunit IL6ST/gp130 to trigger the intracellular IL6-signaling pathway. The interaction with the membrane-bound IL6R and IL6ST stimulates 'classic signaling', whereas the binding of IL6 and soluble IL6R to IL6ST stimulates 'trans-signaling'. Alternatively, 'cluster signaling' occurs when membrane-bound IL6:IL6R complexes on transmitter cells activate IL6ST receptors on neighboring receiver cells. In terms of biological role, IL6 is a potent inducer of the acute phase response. Rapid production of IL6 contributes to host defense during infection and tissue injury, but excessive IL6 synthesis is involved in disease pathology. In the innate immune response, is synthesized by myeloid cells, such as macrophages and dendritic cells, upon recognition of pathogens through toll-like receptors (TLRs) at the site of infection or tissue injury. In the adaptive immune response, is required for the differentiation of B cells into immunoglobulin-secreting cells. Plays a major role in the differentiation of CD4(+) T cell subsets. Essential factor for the development of T follicular helper (Tfh) cells that are required for the induction of germinal-center formation. Required to drive naive CD4(+) T cells to the Th17 lineage. Also required for proliferation of myeloma cells and the survival of plasmablast cells. Its function is as follows. Acts as an essential factor in bone homeostasis and on vessels directly or indirectly by induction of VEGF, resulting in increased angiogenesis activity and vascular permeability. Induces, through 'trans-signaling' and synergistically with IL1B and TNF, the production of VEGF. Involved in metabolic controls, is discharged into the bloodstream after muscle contraction increasing lipolysis and improving insulin resistance. 'Trans-signaling' in central nervous system also regulates energy and glucose homeostasis. Mediates, through GLP-1, crosstalk between insulin-sensitive tissues, intestinal L cells and pancreatic islets to adapt to changes in insulin demand. Also acts as a myokine. Plays a protective role during liver injury, being required for maintenance of tissue regeneration. Also has a pivotal role in iron metabolism by regulating HAMP/hepcidin expression upon inflammation or bacterial infection. Through activation of IL6ST-YAP-NOTCH pathway, induces inflammation-induced epithelial regeneration. The polypeptide is Interleukin-6 (IL6) (Vulpes vulpes (Red fox)).